The chain runs to 1115 residues: Gamma tubulin complex adapter mto1 (1115 aa).

A disordered region spans residues 25-180 (LTDEEVRRIL…NYISSSLDQL (156 aa)). Composition is skewed to basic and acidic residues over residues 28 to 41 (EEVRRILSPRKEGS) and 56 to 71 (EASHKYDFEIDRDSLK). 3 stretches are compositionally biased toward polar residues: residues 72 to 102 (SDSGSPRLHQNATAPTSSTPLQSPDESVNKL), 119 to 130 (DTTNFDRLNDNI), and 139 to 151 (PVLTANQGFQSQE). Position 94 is a phosphoserine (Ser-94). Positions 165 to 176 (SDPSSPNYISSS) are enriched in low complexity. The stretch at 445-915 (NEALLLRKQE…ERNSLIKNIV (471 aa)) forms a coiled coil. Positions 523–537 (LMRMEQQWREDVDQL) are required for interaction with mto2. Over residues 1001-1011 (GSTSSIPNSPR) the composition is skewed to polar residues. 2 disordered regions span residues 1001-1037 (GSTSSIPNSPRASKRVSLDSEDKKLVPASPDKSAVQR) and 1067-1115 (EQEG…QEHK). A phosphoserine mark is found at Ser-1005 and Ser-1009. 2 stretches are compositionally biased toward basic and acidic residues: residues 1016 to 1025 (VSLDSEDKKL) and 1067 to 1084 (EQEGRKRDKLGARERLQD). A coiled-coil region spans residues 1072 to 1102 (KRDKLGARERLQDLIRQNRSLSRQIKTDKES). Polar residues-rich tracts occupy residues 1086 to 1095 (IRQNRSLSRQ) and 1104 to 1115 (SRSPSISSQEHK).

As to quaternary structure, interacts with mto2; the interaction is direct and required for efficient binding to the gamma-tubulin complex. Interacts with gamma tubulin complex subunits alp4, alp6 and gtb1. Interacts with mcp6.

It localises to the cytoplasm. The protein localises to the cytoskeleton. It is found in the microtubule organizing center. Its subcellular location is the spindle pole body. Functionally, spindle pole body (SPB) component that acts as the gamma-tubulin complex-binding protein of the SPB outer plaque. Promotes nucleation of all cytoplasmic microtubules by recruiting the gamma-tubulin complex to the spindle pole body (SPB), to the interphase microtubule organizing center (iMTOC), and to the equatorial MTOC (eMTOC) during anaphase. The sequence is that of Gamma tubulin complex adapter mto1 from Schizosaccharomyces pombe (strain 972 / ATCC 24843) (Fission yeast).